The following is a 338-amino-acid chain: Fructose-1,6-bisphosphatase class 1 (338 aa).

Glu94, Asp116, Leu118, and Asp119 together coordinate Mg(2+). Substrate contacts are provided by residues 119 to 122, Asn210, and Lys276; that span reads DGSS. Glu282 provides a ligand contact to Mg(2+).

It belongs to the FBPase class 1 family. Homotetramer. Mg(2+) is required as a cofactor.

Its subcellular location is the cytoplasm. The catalysed reaction is beta-D-fructose 1,6-bisphosphate + H2O = beta-D-fructose 6-phosphate + phosphate. The protein operates within carbohydrate biosynthesis; gluconeogenesis. This is Fructose-1,6-bisphosphatase class 1 from Burkholderia thailandensis (strain ATCC 700388 / DSM 13276 / CCUG 48851 / CIP 106301 / E264).